The chain runs to 355 residues: Type II methyltransferase M.MthZI (355 aa).

Belongs to the N(4)/N(6)-methyltransferase family. N(4) subfamily.

It carries out the reaction a 2'-deoxycytidine in DNA + S-adenosyl-L-methionine = an N(4)-methyl-2'-deoxycytidine in DNA + S-adenosyl-L-homocysteine + H(+). A beta subtype methylase that recognizes the double-stranded sequence 5'-CTAG-3', methylates C-1 on both strands, and protects the DNA from cleavage by the MthZI endonuclease. The sequence is that of Type II methyltransferase M.MthZI from Methanothermobacter thermautotrophicus (Methanobacterium thermoformicicum).